Reading from the N-terminus, the 397-residue chain is 3-ketoacyl-CoA thiolase, mitochondrial (397 aa).

The N-terminal 16 residues, 1 to 16 (MALLRGVFVVAAKRTP), are a transit peptide targeting the mitochondrion; not cleaved. Lys25 is modified (N6-acetyllysine; alternate). Residue Lys25 is modified to N6-succinyllysine; alternate. N6-succinyllysine is present on Lys45. The active-site Acyl-thioester intermediate is the Cys92. Position 119 is a phosphothreonine (Thr119). Ser121 carries the phosphoserine modification. Tyr127 carries the post-translational modification Phosphotyrosine. Thr136 is subject to Phosphothreonine. Position 137 is an N6-acetyllysine; alternate (Lys137). An N6-succinyllysine; alternate modification is found at Lys137. Ser140 bears the Phosphoserine mark. Residues Lys143, Lys171, Lys191, and Lys209 each carry the N6-acetyllysine; alternate modification. Lys143, Lys171, Lys191, and Lys209 each carry N6-succinyllysine; alternate. N6-succinyllysine is present on residues Lys211, Lys212, and Lys214. Residues Arg224 and Thr227 each coordinate CoA. Residue Lys234 is modified to N6-acetyllysine; alternate. N6-succinyllysine; alternate is present on Lys234. Lys240 is subject to N6-succinyllysine. Lys241 bears the N6-acetyllysine mark. Residue Ser251 participates in CoA binding. N6-acetyllysine is present on residues Lys269 and Lys270. Lys305 carries the post-translational modification N6-acetyllysine; alternate. Lys305 is modified (N6-succinyllysine; alternate). Ser310 is subject to Phosphoserine. Position 312 is an N6-acetyllysine; alternate (Lys312). Lys312 is subject to N6-succinyllysine; alternate. Position 333 is a phosphoserine (Ser333). An N6-acetyllysine mark is found at Lys340 and Lys375. Cys382 serves as the catalytic Proton donor/acceptor.

The protein belongs to the thiolase-like superfamily. Thiolase family. As to quaternary structure, homotetramer. Interacts with BNIP3.

Its subcellular location is the mitochondrion. It carries out the reaction an acyl-CoA + acetyl-CoA = a 3-oxoacyl-CoA + CoA. The catalysed reaction is 2 acetyl-CoA = acetoacetyl-CoA + CoA. It catalyses the reaction acetyl-CoA + H2O = acetate + CoA + H(+). The enzyme catalyses propanoyl-CoA + H2O = propanoate + CoA + H(+). It carries out the reaction butanoyl-CoA + H2O = butanoate + CoA + H(+). The catalysed reaction is hexanoyl-CoA + H2O = hexanoate + CoA + H(+). It catalyses the reaction octanoyl-CoA + H2O = octanoate + CoA + H(+). The enzyme catalyses decanoyl-CoA + H2O = decanoate + CoA + H(+). It carries out the reaction dodecanoyl-CoA + H2O = dodecanoate + CoA + H(+). The catalysed reaction is tetradecanoyl-CoA + H2O = tetradecanoate + CoA + H(+). It catalyses the reaction hexadecanoyl-CoA + H2O = hexadecanoate + CoA + H(+). It participates in lipid metabolism; fatty acid beta-oxidation. Functionally, in the production of energy from fats, this is one of the enzymes that catalyzes the last step of the mitochondrial beta-oxidation pathway, an aerobic process breaking down fatty acids into acetyl-CoA. Using free coenzyme A/CoA, catalyzes the thiolytic cleavage of medium- to long-chain unbranched 3-oxoacyl-CoAs into acetyl-CoA and a fatty acyl-CoA shortened by two carbon atoms. Also catalyzes the condensation of two acetyl-CoA molecules into acetoacetyl-CoA and could be involved in the production of ketone bodies. Also displays hydrolase activity on various fatty acyl-CoAs. Thereby, could be responsible for the production of acetate in a side reaction to beta-oxidation. Abolishes BNIP3-mediated apoptosis and mitochondrial damage. This chain is 3-ketoacyl-CoA thiolase, mitochondrial (ACAA2), found in Pongo abelii (Sumatran orangutan).